We begin with the raw amino-acid sequence, 298 residues long: Estradiol 17-beta-dehydrogenase 11 (298 aa).

The N-terminal stretch at 1–21 (MKYLLDLILLLPLLIVFCIES) is a signal peptide. 40–64 (LITGAGHGIGRLTAYEFAKLNTKLV) provides a ligand contact to NADP(+). A substrate-binding site is contributed by Ser-172. Residue Tyr-185 is the Proton acceptor of the active site.

It belongs to the short-chain dehydrogenases/reductases (SDR) family. 17-beta-HSD 3 subfamily.

The protein localises to the endoplasmic reticulum. Its subcellular location is the lipid droplet. The catalysed reaction is 17beta-estradiol + NAD(+) = estrone + NADH + H(+). The enzyme catalyses 17beta-estradiol + NADP(+) = estrone + NADPH + H(+). Functionally, can convert androstan-3-alpha,17-beta-diol (3-alpha-diol) to androsterone in vitro, suggesting that it may participate in androgen metabolism during steroidogenesis. May act by metabolizing compounds that stimulate steroid synthesis and/or by generating metabolites that inhibit it. Has no activity toward DHEA (dehydroepiandrosterone), or A-dione (4-androste-3,17-dione), and only a slight activity toward testosterone to A-dione. The chain is Estradiol 17-beta-dehydrogenase 11 (Hsd17b11) from Rattus norvegicus (Rat).